Reading from the N-terminus, the 233-residue chain is METTEGKNDLRAKLAEKIQTFRSQRKATEKVDRALLLQRRKEKAKARAEAKKLAKKESKAKQESKVAAYDTGNSSDNIADEENDNHKSTITYGTLIVGDDKFSNGKLKVAGKKRGPTDVFGALKHLEAKKRRIESMDEEKRRKIEESDKWHRVLLQAEGKKLKDNEQLLKKSIRRKEKEKKKSSDAWKERKDNEKKAMLMRQQRREENLKKRRESKKSKKGKAPKKKKPSKKK.

Residues 32-65 (DRALLLQRRKEKAKARAEAKKLAKKESKAKQESK) adopt a coiled-coil conformation. Residues 47–64 (RAEAKKLAKKESKAKQES) show a composition bias toward basic and acidic residues. Disordered regions lie at residues 47–87 (RAEA…DNHK), 130–149 (KRRI…ESDK), and 164–233 (DNEQ…SKKK). Ser75 carries the post-translational modification Phosphoserine. A coiled-coil region spans residues 122 to 223 (ALKHLEAKKR…ESKKSKKGKA (102 aa)). Composition is skewed to basic and acidic residues over residues 133-149 (IESM…ESDK) and 180-209 (KKKS…EENL). Basic residues predominate over residues 210 to 233 (KKRRESKKSKKGKAPKKKKPSKKK).

The protein belongs to the SURF6 family. In terms of assembly, component of the 90S and 60S pre-ribosomal particles.

The protein localises to the nucleus. It localises to the nucleolus. Involved in ribosome biogenesis and cell polarity. Required for the synthesis of both 40S and 60S ribosomal subunits and may also play some direct role in correct positioning of the mitotic spindle during mitosis. The chain is Ribosomal RNA-processing protein 14-C (rrp14c) from Schizosaccharomyces pombe (strain 972 / ATCC 24843) (Fission yeast).